Reading from the N-terminus, the 287-residue chain is uncharacterized protein (287 aa).

Residues 43-50 (GKTGVGKS), 90-93 (DLPG), and 156-159 (DKAE) each bind GTP. The 91-residue stretch at 48–138 (GKSSLCNALF…LTVDEHFYHQ (91 aa)) folds into the G domain.

To E.coli YfjP and YeeP.

This is an uncharacterized protein from Escherichia coli (strain K12).